A 251-amino-acid polypeptide reads, in one-letter code: Imidazole glycerol phosphate synthase subunit HisF (251 aa).

Residues Asp-11 and Asp-130 contribute to the active site.

This sequence belongs to the HisA/HisF family. As to quaternary structure, heterodimer of HisH and HisF.

It localises to the cytoplasm. The catalysed reaction is 5-[(5-phospho-1-deoxy-D-ribulos-1-ylimino)methylamino]-1-(5-phospho-beta-D-ribosyl)imidazole-4-carboxamide + L-glutamine = D-erythro-1-(imidazol-4-yl)glycerol 3-phosphate + 5-amino-1-(5-phospho-beta-D-ribosyl)imidazole-4-carboxamide + L-glutamate + H(+). It participates in amino-acid biosynthesis; L-histidine biosynthesis; L-histidine from 5-phospho-alpha-D-ribose 1-diphosphate: step 5/9. In terms of biological role, IGPS catalyzes the conversion of PRFAR and glutamine to IGP, AICAR and glutamate. The HisF subunit catalyzes the cyclization activity that produces IGP and AICAR from PRFAR using the ammonia provided by the HisH subunit. The protein is Imidazole glycerol phosphate synthase subunit HisF of Prosthecochloris aestuarii (strain DSM 271 / SK 413).